A 72-amino-acid polypeptide reads, in one-letter code: Putative snRNP Sm-like protein (72 aa).

The Sm domain occupies 4 to 72 (RPLDILNDAL…RGDNVVYVSP (69 aa)).

Belongs to the snRNP Sm proteins family.

The protein is Putative snRNP Sm-like protein of Methanococcoides burtonii (strain DSM 6242 / NBRC 107633 / OCM 468 / ACE-M).